Consider the following 373-residue polypeptide: Sensor protein DegM (373 aa).

The next 4 membrane-spanning stretches (helical) occupy residues 27-47, 57-77, 91-111, and 122-142; these read ILLA…AIAV, LFLL…LCVN, YASL…LYLI, and VAGW…TYLF. The Histidine kinase domain occupies 170–370; it reads SIAHEVRNPL…KVVLSLPIEK (201 aa). Position 173 is a phosphohistidine; by autocatalysis (histidine 173).

Its subcellular location is the cell membrane. The enzyme catalyses ATP + protein L-histidine = ADP + protein N-phospho-L-histidine.. Its function is as follows. Involved in a sensory transduction pathway that enhances the production of minor proteases. This Bacillus sp. (strain B21-2) protein is Sensor protein DegM (degM).